The primary structure comprises 183 residues: I-kappa-B like protein N2 (183 aa).

2 ANK repeats span residues 62 to 95 and 99 to 129; these read DGNTCLHEAALRNKGPQAIRIMEKLIEYGADLNL and CHKPVLHVAVERNDYELVAWICQQPGINLEA. Residues 163-183 are disordered; the sequence is PRQDGSSEDEVSDSEEKSDSE.

Belongs to the polydnaviridae I-Kappa-B like protein family.

In terms of biological role, suppresses the host immune response through NF-kappa-B inactivation. Possesses ankyrin repeat domains required for NF-kappa-B binding but lacks the regulatory regions required for dissociation from NF-kappa-B and degradation. Therefore, prevents host NF-kappa-B release and subsequent activation. The polypeptide is I-kappa-B like protein N2 (N5) (Microplitis demolitor (Parasitoid wasp)).